A 335-amino-acid chain; its full sequence is Cytoplasmic envelopment protein 2 (335 aa).

Belongs to the herpesviridae cytoplasmic envelopment protein 2 family. As to quaternary structure, interacts with cytoplasmic envelopment protein 3 and with the capsid.

It localises to the virion tegument. The protein resides in the host cytoplasm. It is found in the host nucleus. In terms of biological role, plays a critical role in cytoplasmic virus egress. Participates in the final step of tegumentation and envelope acquisition within the host cytoplasm by directly interacting with the capsid. Upon virion binding to target cell, a signaling cascade is triggered to disrupt the interaction with the capsid, thereby preparing capsid uncoating. The polypeptide is Cytoplasmic envelopment protein 2 (33) (Connochaetes taurinus (Blue wildebeest)).